The sequence spans 132 residues: uncharacterized protein (132 aa).

The signal sequence occupies residues 1–18; it reads MRKIISMLFIPLFIFAMA.

This is an uncharacterized protein from Aquifex aeolicus (strain VF5).